The primary structure comprises 71 residues: MVLRQLSRKASVKVSKTWSGTKKRAQRILIFLLEFLLDFCTGEDSVDGKKRQRHSGLTEQTYSALPEPKAT.

The Cytoplasmic segment spans residues 1-27; that stretch reads MVLRQLSRKASVKVSKTWSGTKKRAQR. Phosphoserine; by host occurs at positions 7 and 11. Threonine 21 is subject to Phosphothreonine; by host. Residues 28-44 form a helical; Signal-anchor for type II membrane protein membrane-spanning segment; that stretch reads ILIFLLEFLLDFCTGED. Residues 45-71 are Extracellular-facing; the sequence is SVDGKKRQRHSGLTEQTYSALPEPKAT. Residues 45–71 form a disordered region; sequence SVDGKKRQRHSGLTEQTYSALPEPKAT.

Belongs to the polyomavirus agnoprotein family. Homooligomer. Interacts with VP1. Interacts with large T antigen; this interaction may impact upon the activity of T-antigen on the control of viral gene transcription and replication. Interacts with small t antigen. Interacts with host PP2A subunits for dephosphorylation. Interacts (via N-terminus) with host YBX1; this interaction modulates transcriptional activity genomic promoters. Interacts (via N-terminus) with host TP53. Interacts with host FEZ1; this interaction disrupts the association between FEZ1 and microtubules. Interacts with host CBX5; this interaction induces the dissociation of CBX5 from LBR, resulting in destabilization of the nuclear envelope. Post-translationally, phosphorylated by host PKC. Phosphorylation alters the stability and may also have an impact on the subcellular location.

Its subcellular location is the host cytoplasm. It localises to the host nucleus membrane. The protein localises to the host rough endoplasmic reticulum membrane. The protein resides in the host cell membrane. Its function is as follows. Alters the structure of the nuclear envelope by interacting with host CBX5 and disrupting CBX5 association with LBR. Involved in the perinuclear-nuclear localization of the capsid protein VP1 during virion assembly and maturation. Plays an important role in the release of progeny virions from infected cells and in viral propagation, probably by acting as a viral ionic channel in the host plasma membrane. Allows influx of extracellular calcium ions in the host cell. May contribute to viral genome transcription and translation of viral late proteins. In Homo sapiens (Human), this protein is Agnoprotein.